We begin with the raw amino-acid sequence, 67 residues long: MARITVEDCLTKIPNRFQLVLAATYRARMLSQGHAPKVESKNKPGVTALREIAEGHVGLEMLRKVPV.

This sequence belongs to the RNA polymerase subunit omega family. As to quaternary structure, the RNAP catalytic core consists of 2 alpha, 1 beta, 1 beta' and 1 omega subunit. When a sigma factor is associated with the core the holoenzyme is formed, which can initiate transcription.

The catalysed reaction is RNA(n) + a ribonucleoside 5'-triphosphate = RNA(n+1) + diphosphate. Functionally, promotes RNA polymerase assembly. Latches the N- and C-terminal regions of the beta' subunit thereby facilitating its interaction with the beta and alpha subunits. The polypeptide is DNA-directed RNA polymerase subunit omega (Methylibium petroleiphilum (strain ATCC BAA-1232 / LMG 22953 / PM1)).